Reading from the N-terminus, the 686-residue chain is Chondroitin synthase (686 aa).

The segment at 130 to 417 is galactosaminyltransferase; A1 domain; it reads YVWAGKRKEL…LLQQKVPYFY (288 aa). Residues Pro-157, Arg-161, Asp-188, Tyr-217, Arg-223, and 239–240 contribute to the UDP-N-acetyl-alpha-D-galactosamine site; that span reads DC. A Mn(2+)-binding site is contributed by Asp-241. 361–362 provides a ligand contact to UDP-N-acetyl-alpha-D-galactosamine; the sequence is ED. Residue His-386 coordinates Mn(2+). The interval 418–682 is glucuronosyltransferase; A2 domain; that stretch reads RKKEKIESAT…ECRKYTWEKI (265 aa). UDP-alpha-D-glucuronate-binding positions include Tyr-441, Asp-469, and 517–520; that span reads QLDS. Asp-521 contacts Mn(2+). UDP-alpha-D-glucuronate contacts are provided by residues His-581 and 603-604; that span reads AV. His-631 serves as a coordination point for Mn(2+).

It belongs to the glycosyltransferase 2 family. CS/HAS subfamily. Mn(2+) is required as a cofactor.

The enzyme catalyses 3-O-(beta-D-GlcA-(1-&gt;3)-beta-D-GalNAc-(1-&gt;4)-beta-D-GlcA-(1-&gt;3)-beta-D-Gal-(1-&gt;3)-beta-D-Gal-(1-&gt;4)-beta-D-Xyl)-L-seryl-[protein] + UDP-N-acetyl-alpha-D-galactosamine = 3-O-(beta-D-GalNAc-(1-&gt;4)-beta-D-GlcA-(1-&gt;3)-beta-D-GalNAc-(1-&gt;4)-beta-D-GlcA-(1-&gt;3)-beta-D-Gal-(1-&gt;3)-beta-D-Gal-(1-&gt;4)-beta-D-Xyl)-L-seryl-[protein] + UDP + H(+). It carries out the reaction 3-O-{beta-D-GlcA-(1-&gt;3)-[beta-D-GalNAc-(1-&gt;4)-beta-D-GlcA-(1-&gt;3)](n)-beta-D-GalNAc-(1-&gt;4)-beta-D-GlcA-(1-&gt;3)-beta-D-Gal-(1-&gt;3)-beta-D-Gal-(1-&gt;4)-beta-D-Xyl}-L-seryl-[protein] + UDP-N-acetyl-alpha-D-galactosamine = 3-O-{[beta-D-GalNAc-(1-&gt;4)-beta-D-GlcA-(1-&gt;3)](n+1)-beta-D-GalNAc-(1-&gt;4)-beta-D-GlcA-(1-&gt;3)-beta-D-Gal-(1-&gt;3)-beta-D-Gal-(1-&gt;4)-beta-D-Xyl}-L-seryl-[protein] + UDP + H(+). It catalyses the reaction 3-O-(beta-D-GalNAc-(1-&gt;4)-beta-D-GlcA-(1-&gt;3)-beta-D-Gal-(1-&gt;3)-beta-D-Gal-(1-&gt;4)-beta-D-Xyl)-L-seryl-[protein] + UDP-alpha-D-glucuronate = 3-O-(beta-D-GlcA-(1-&gt;3)-beta-D-GalNAc-(1-&gt;4)-beta-D-GlcA-(1-&gt;3)-beta-D-Gal-(1-&gt;3)-beta-D-Gal-(1-&gt;4)-beta-D-Xyl)-L-seryl-[protein] + UDP + H(+). The catalysed reaction is 3-O-{[beta-D-GalNAc-(1-&gt;4)-beta-D-GlcA-(1-&gt;3)](n)-beta-D-GalNAc-(1-&gt;4)-beta-D-GlcA-(1-&gt;3)-beta-D-Gal-(1-&gt;3)-beta-D-Gal-(1-&gt;4)-beta-D-Xyl}-L-seryl-[protein] + UDP-alpha-D-glucuronate = 3-O-{beta-D-GlcA-(1-&gt;3)-[beta-D-GalNAc-(1-&gt;4)-beta-D-GlcA-(1-&gt;3)](n)-beta-D-GalNAc-(1-&gt;4)-beta-D-GlcA-(1-&gt;3)-beta-D-Gal-(1-&gt;3)-beta-D-Gal-(1-&gt;4)-beta-D-Xyl}-L-seryl-[protein] + UDP + H(+). Functionally, glycosyltransferase that catalyzes elongation of chondroitin, a polysaccharide composed of a repeating disaccharide of N-acetylgalactosamine (GalNAc) and glucuronic acid (GlcUA) units, by alternatively transferring the GlcUA and GalNAc moiety from UDP-GlcUA and UDP-GalNAc to the non-reducing ends of the chondroitin chain. Each chondroitin unit has the composition beta-(1-&gt;4)-GlcUA-beta-(1-&gt;3)-GalNAc. The chain is Chondroitin synthase (kfoC) from Escherichia coli.